The primary structure comprises 294 residues: dTDP-4-dehydrorhamnose reductase (294 aa).

Residues 11–13 (GQL), 38–39 (DI), and 62–64 (AYT) each bind NADH. Residues 12–13 (QL), 38–39 (DI), and 62–64 (AYT) contribute to the NADPH site. 103-104 (TD) provides a ligand contact to dTDP-beta-L-rhamnose. Positions 127 and 131 each coordinate NADH. Y127 and K131 together coordinate NADPH. The active-site Proton donor/acceptor is Y127. W152 provides a ligand contact to dTDP-beta-L-rhamnose.

This sequence belongs to the dTDP-4-dehydrorhamnose reductase family. Homodimer. Mg(2+) serves as cofactor.

The catalysed reaction is dTDP-beta-L-rhamnose + NADP(+) = dTDP-4-dehydro-beta-L-rhamnose + NADPH + H(+). Its pathway is carbohydrate biosynthesis; dTDP-L-rhamnose biosynthesis. The protein operates within bacterial outer membrane biogenesis; LPS O-antigen biosynthesis. In terms of biological role, involved in the biosynthesis of the dTDP-L-rhamnose which is an important component of lipopolysaccharide (LPS). Catalyzes the reduction of dTDP-6-deoxy-L-lyxo-4-hexulose to yield dTDP-L-rhamnose. The chain is dTDP-4-dehydrorhamnose reductase from Aggregatibacter actinomycetemcomitans (Actinobacillus actinomycetemcomitans).